The primary structure comprises 337 residues: Ornithine carbamoyltransferase, catabolic (337 aa).

Residues 57 to 60 (STRT), glutamine 84, arginine 108, and 135 to 138 (HPTQ) each bind carbamoyl phosphate. Residues asparagine 167, aspartate 231, and 235–236 (SM) contribute to the L-ornithine site. Carbamoyl phosphate-binding positions include 272–273 (CL) and arginine 317.

This sequence belongs to the aspartate/ornithine carbamoyltransferase superfamily. OTCase family.

The protein localises to the cytoplasm. It carries out the reaction carbamoyl phosphate + L-ornithine = L-citrulline + phosphate + H(+). It functions in the pathway amino-acid degradation; L-arginine degradation via ADI pathway; carbamoyl phosphate from L-arginine: step 2/2. In terms of biological role, reversibly catalyzes the transfer of the carbamoyl group from carbamoyl phosphate (CP) to the N(epsilon) atom of ornithine (ORN) to produce L-citrulline. The polypeptide is Ornithine carbamoyltransferase, catabolic (arcB) (Streptococcus pyogenes serotype M1).